The sequence spans 1729 residues: Zinc finger CCCH domain-containing protein 13 (1729 aa).

Disordered regions lie at residues 1–40 (MSKI…TTET) and 57–156 (CRFI…NGDI). Residues 10-23 (VENTKTISESTSRR) are compositionally biased toward polar residues. The segment at 36–64 (STTETQCRNWLKTGSCLYGNTCRFIHGPS) adopts a C3H1-type zinc-finger fold. 2 positions are modified to phosphoserine: Ser64 and Ser77. The span at 76-136 (RSPERPTGDL…IKIVKERTPE (61 aa)) shows a compositional bias: basic and acidic residues. Residues 162 to 196 (HELSLEMKRQKIQRELMKLEQENMDKREEIIIQKE) adopt a coiled-coil conformation. Residue Lys179 forms a Glycyl lysine isopeptide (Lys-Gly) (interchain with G-Cter in SUMO2) linkage. The segment covering 182–193 (QENMDKREEIII) has biased composition (basic and acidic residues). Disordered stretches follow at residues 182–528 (QENM…IRDV) and 581–1527 (DVYQ…PISD). Phosphoserine is present on residues Ser198, Ser207, Ser209, and Ser211. The segment covering 204-213 (SKLSPSPSLR) has biased composition (low complexity). Residues 214-224 (KSSKSPKRKSS) are compositionally biased toward basic residues. Position 242 is a phosphoserine (Ser242). Residues 245–254 (LDQQRNSKGN) are compositionally biased toward polar residues. At Thr263 the chain carries Phosphothreonine. A Phosphoserine modification is found at Ser265. The segment covering 283–315 (KYKVKDRIEEKPRDGKDRGRDFEKQREKRDKPR) has biased composition (basic and acidic residues). 4 positions are modified to phosphoserine: Ser316, Ser318, Ser324, and Ser327. Positions 321-345 (QHHSPLSSRHHSSSSQSGSSIQRHS) are enriched in low complexity. Residues Thr353 and Thr363 each carry the phosphothreonine modification. Residues 358 to 368 (YQRTLTPSLRR) are compositionally biased toward polar residues. Phosphoserine is present on residues Ser369, Ser371, and Ser380. 2 stretches are compositionally biased toward basic and acidic residues: residues 393–528 (PMRE…IRDV) and 581–636 (DVYQ…EKGS). Over residues 639-654 (TRGSQMDSHSSGSNYH) the composition is skewed to polar residues. The segment covering 655 to 701 (DSWETRSSYPERDRYPERDTRDPARDSSFERRHGERDRRDNRERDQR) has biased composition (basic and acidic residues). Phosphoserine is present on Ser704. The stretch at 706 to 865 (IRHQGRSEEL…KERERQREWE (160 aa)) forms a coiled coil. Residues 710 to 897 (GRSEELERDE…IPRDSHEERK (188 aa)) show a composition bias toward basic and acidic residues. Phosphoserine is present on residues Ser907, Ser909, Ser913, Ser921, Ser924, Ser929, Ser949, Ser951, and Ser953. Over residues 920-938 (HSPDSDTYHSGDDKNEKHR) the composition is skewed to basic and acidic residues. A compositionally biased stretch (basic and acidic residues) spans 957–1035 (LTEDRQGRWK…GSDRAHDEKK (79 aa)). Thr958 carries the post-translational modification Phosphothreonine. The segment covering 1036–1046 (KAKAPKKPVKK) has biased composition (basic residues). Residues 1047 to 1065 (KKEEDVGVERGNLETHEDS) show a composition bias toward basic and acidic residues. Phosphoserine occurs at positions 1069, 1086, 1090, and 1093. A compositionally biased stretch (basic residues) spans 1072–1086 (KGQKKKNIEKKRKRS). Thr1109 carries the phosphothreonine modification. Basic and acidic residues-rich tracts occupy residues 1114-1137 (IKEE…KKEN) and 1149-1159 (PDRTEGLEAEH). Low complexity-rich tracts occupy residues 1160–1176 (TAAT…LSSL) and 1184–1218 (AAAS…TNGS). Over residues 1228–1253 (ARGEKVEVSHVTLEDTPHRKLVDQKR) the composition is skewed to basic and acidic residues. 4 positions are modified to phosphoserine: Ser1256, Ser1259, Ser1273, and Ser1275. The span at 1278 to 1288 (SAHRSGDDQGS) shows a compositional bias: basic and acidic residues. Residue Ser1295 is modified to Phosphoserine. Basic and acidic residues-rich tracts occupy residues 1296-1351 (GSRD…DRQV) and 1359-1440 (DSRD…ERTF). Phosphoserine occurs at positions 1427, 1443, 1447, 1467, 1470, 1499, and 1526. Composition is skewed to basic and acidic residues over residues 1447–1482 (SGKR…DRDL) and 1490–1499 (DVSKAERTES).

This sequence belongs to the ZC3H13 family. As to quaternary structure, component of the WMM complex, a N6-methyltransferase complex composed of a catalytic subcomplex, named MAC, and of an associated subcomplex, named MACOM. The MAC subcomplex is composed of METTL3 and METTL14. The MACOM subcomplex is composed of WTAP, ZC3H13, CBLL1/HAKAI, VIRMA, and, in some cases of RBM15 (RBM15 or RBM15B). Also a component of a MACOM-like complex, named WTAP complex, composed of WTAP, ZC3H13, CBLL1/HAKAI, VIRMA, RBM15, BCLAF1 and THRAP3.

It is found in the nucleus speckle. Its subcellular location is the nucleus. It localises to the nucleoplasm. Functionally, associated component of the WMM complex, a complex that mediates N6-methyladenosine (m6A) methylation of RNAs, a modification that plays a role in the efficiency of mRNA splicing and RNA processing. Acts as a key regulator of m6A methylation by promoting m6A methylation of mRNAs at the 3'-UTR. Controls embryonic stem cells (ESCs) pluripotency via its role in m6A methylation. In the WMM complex, anchors component of the MACOM subcomplex in the nucleus. Also required for bridging WTAP to the RNA-binding component RBM15 (RBM15 or RBM15B). The chain is Zinc finger CCCH domain-containing protein 13 from Mus musculus (Mouse).